The chain runs to 512 residues: Cytochrome P450 26B1 (512 aa).

Cys441 is a binding site for heme.

This sequence belongs to the cytochrome P450 family. The cofactor is heme.

It is found in the endoplasmic reticulum membrane. It localises to the microsome membrane. The enzyme catalyses all-trans-retinoate + reduced [NADPH--hemoprotein reductase] + O2 = all-trans-4-hydroxyretinoate + oxidized [NADPH--hemoprotein reductase] + H2O + H(+). It catalyses the reaction all-trans-retinoate + reduced [NADPH--hemoprotein reductase] + O2 = all-trans-18-hydroxyretinoate + oxidized [NADPH--hemoprotein reductase] + H2O + H(+). A cytochrome P450 monooxygenase involved in the metabolism of retinoates (RAs), the active metabolites of vitamin A, and critical signaling molecules in animals. RAs exist as at least four different isomers: all-trans-RA (atRA), 9-cis-RA, 13-cis-RA, and 9,13-dicis-RA, where atRA is considered to be the biologically active isomer, although 9-cis-RA and 13-cis-RA also have activity. Catalyzes the hydroxylation of atRA primarily at C-4 and C-18, thereby contributing to the regulation of atRA homeostasis and signaling. Hydroxylation of atRA limits its biological activity and initiates a degradative process leading to its eventual elimination. Involved in the convertion of atRA to all-trans-4-oxo-RA. Can oxidize all-trans-13,14-dihydroretinoate (DRA) to metabolites which could include all-trans-4-oxo-DRA, all-trans-4-hydroxy-DRA, all-trans-5,8-epoxy-DRA, and all-trans-18-hydroxy-DRA. Shows preference for the following substrates: atRA &gt; 9-cis-RA &gt; 13-cis-RA. Plays a central role in germ cell development: acts by degrading RAs in the developing testis, preventing STRA8 expression, thereby leading to delay of meiosis. Required for the maintenance of the undifferentiated state of male germ cells during embryonic development in Sertoli cells, inducing arrest in G0 phase of the cell cycle and preventing meiotic entry. Plays a role in skeletal development, both at the level of patterning and in the ossification of bone and the establishment of some synovial joints. Essential for postnatal survival. Its function is as follows. Also has a significant activity in oxidation of tazarotenic acid and may therefore metabolize that xenobiotic in vivo. The protein is Cytochrome P450 26B1 (Cyp26b1) of Mus musculus (Mouse).